The following is a 343-amino-acid chain: MDNGSCCLIEGEPISQVMPPLLILVFVLGALGNGIALCGFCFHMKTWKSSTIYLFNLAVADFLLMICLPLRTDYYLRRRHWIFGDIACRLVLFKLAMNRAGSIVFLTVVAVDRYFKVVHPHHMVNAISNRTAAATACVLWTLVILGTVYLLMESHLCVQGTLSSCESFIMESANGWHDVMFQLEFFLPLTIILFCSVNVVWSLRRRQQLTRQARMRRATRFIMVVASVFITCYLPSVLARLYFLWTVPTSACDPSVHTALHVTLSFTYLNSMLDPLVYYFSSPSLPKFYTKLTICSLKPKRPGRTKTRRSEEMPISNLCSKSSIDGANRSQRPSDGQWDLQVC.

Topologically, residues 1 to 21 (MDNGSCCLIEGEPISQVMPPL) are extracellular. An N-linked (GlcNAc...) asparagine glycan is attached at asparagine 3. A helical transmembrane segment spans residues 22-42 (LILVFVLGALGNGIALCGFCF). The Cytoplasmic segment spans residues 43-49 (HMKTWKS). The chain crosses the membrane as a helical span at residues 50-70 (STIYLFNLAVADFLLMICLPL). Topologically, residues 71–90 (RTDYYLRRRHWIFGDIACRL) are extracellular. An intrachain disulfide couples cysteine 88 to cysteine 165. A helical transmembrane segment spans residues 91 to 111 (VLFKLAMNRAGSIVFLTVVAV). At 112–131 (DRYFKVVHPHHMVNAISNRT) the chain is on the cytoplasmic side. The helical transmembrane segment at 132 to 152 (AAATACVLWTLVILGTVYLLM) threads the bilayer. The Extracellular segment spans residues 153 to 182 (ESHLCVQGTLSSCESFIMESANGWHDVMFQ). Residues 183–203 (LEFFLPLTIILFCSVNVVWSL) traverse the membrane as a helical segment. The Cytoplasmic portion of the chain corresponds to 204 to 220 (RRRQQLTRQARMRRATR). Residues 221-241 (FIMVVASVFITCYLPSVLARL) form a helical membrane-spanning segment. Over 242–259 (YFLWTVPTSACDPSVHTA) the chain is Extracellular. Residues 260-280 (LHVTLSFTYLNSMLDPLVYYF) traverse the membrane as a helical segment. Residues 281-343 (SSPSLPKFYT…SDGQWDLQVC (63 aa)) lie on the Cytoplasmic side of the membrane. The span at 319-334 (CSKSSIDGANRSQRPS) shows a compositional bias: polar residues. The segment at 319 to 343 (CSKSSIDGANRSQRPSDGQWDLQVC) is disordered.

It belongs to the G-protein coupled receptor 1 family. As to expression, highly expressed in subcutaneous fat and omental fat and detectable in lower levels in brain and many other tissues. High levels detected in epididymal and subcutaneous fat with slightly lower in omental fat, low levels are detected in the brain, skeletal muscle, kidney, liver and the pancreas (at protein level).

Its subcellular location is the cell membrane. Its function is as follows. Acts as a receptor for L-lactate and mediates its anti-lipolytic effect through a G(i)-protein-mediated pathway. In Mus musculus (Mouse), this protein is Hydroxycarboxylic acid receptor 1 (Hcar1).